Reading from the N-terminus, the 871-residue chain is MAEEFVTLKDVGMDFTLGDWEQLGLEQGDTFWDTALDNCQDLFLLDPPRPNLTSHPDGSEDLEPLAGGSPEATSPDVTETKNSPLMEDFFEEGFSQEIIEMLSKDGFWNSNFGEACIEDTWLDSLLGDPESLLRSDIATNGESPTECKSHELKRGLSPVSTVSTGEDSMVHNVSEKTLTPAKSKEYRGEFFSYSDHSQQDSVQEGEKPYQCSECGKSFSGSYRLTQHWITHTREKPTVHQECEQGFDRNASLSVYPKTHTGYKFYVCNEYGTTFSQSTYLWHQKTHTGEKPCKSQDSDHPPSHDTQPGEHQKTHTDSKSYNCNECGKAFTRIFHLTRHQKIHTRKRYECSKCQATFNLRKHLIQHQKTHAAKTTSECQECGKIFRHSSLLIEHQALHAGEEPYKCNERGKSFRHNSTLKIHQRVHSGEKPYKCSECGKAFHRHTHLNEHRRIHTGYRPHKCQECVRSFSRPSHLMRHQAIHTAEKPYSCAECKETFSDNNRLVQHQKMHTVKTPYECQECGERFICGSTLKCHESVHAREKQGFFVSGKILDQNPEQKEKCFKCNKCEKTFSCSKYLTQHERIHTRGVKPFECDQCGKAFGQSTRLIHHQRIHSRVRLYKWGEQGKAISSASLIKLQSFHTKEHPFKCNECGKTFSHSAHLSKHQLIHAGENPFKCSKCDRVFTQRNYLVQHERTHARKKPLVCNECGKTFRQSSCLSKHQRIHSGEKPYVCDYCGKAFGLSAELVRHQRIHTGEKPYVCQECGKAFTQSSCLSIHRRVHTGEKPYRCGECGKAFAQKANLTQHQRIHTGEKPYSCNVCGKAFVLSAHLNQHLRVHTQETLYQCQRCQKAFRCHSSLSRHQRVHNKQQYCL.

Residues 6 to 75 (VTLKDVGMDF…AGGSPEATSP (70 aa)) enclose the KRAB domain. Disordered regions lie at residues 47–81 (PPRP…TETK) and 140–164 (NGES…TVST). The span at 71–81 (EATSPDVTETK) shows a compositional bias: polar residues. Over residues 145–154 (TECKSHELKR) the composition is skewed to basic and acidic residues. Residue lysine 148 forms a Glycyl lysine isopeptide (Lys-Gly) (interchain with G-Cter in SUMO2) linkage. The C2H2-type 1 zinc-finger motif lies at 209-231 (YQCSECGKSFSGSYRLTQHWITH). The C2H2-type 2; degenerate zinc finger occupies 265–286 (YVCNEYGTTFSQSTYLWHQKTH). Basic and acidic residues predominate over residues 290–317 (KPCKSQDSDHPPSHDTQPGEHQKTHTDS). Positions 290 to 318 (KPCKSQDSDHPPSHDTQPGEHQKTHTDSK) are disordered. Residues 312 to 552 (KTHTDSKSYN…GFFVSGKILD (241 aa)) form an interaction with SLBP/pre-mRNA complex region. 3 consecutive C2H2-type zinc fingers follow at residues 320–342 (YNCN…QKIH), 347–369 (YECS…QKTH), and 375–397 (SECQ…QALH). A C2H2-type 6; degenerate zinc finger spans residues 403–425 (YKCNERGKSFRHNSTLKIHQRVH). A Glycyl lysine isopeptide (Lys-Gly) (interchain with G-Cter in SUMO2) cross-link involves residue lysine 419. C2H2-type zinc fingers lie at residues 431–453 (YKCS…RRIH), 459–481 (HKCQ…QAIH), 487–509 (YSCA…QKMH), and 515–537 (YECQ…ESVH). Glycyl lysine isopeptide (Lys-Gly) (interchain with G-Cter in SUMO2) cross-links involve residues lysine 549 and lysine 558. C2H2-type zinc fingers lie at residues 562–584 (FKCN…ERIH) and 591–613 (FECD…QRIH). A Glycyl lysine isopeptide (Lys-Gly) (interchain with G-Cter in SUMO2) cross-link involves residue lysine 635. 8 consecutive C2H2-type zinc fingers follow at residues 646 to 668 (FKCN…QLIH), 674 to 696 (FKCS…ERTH), 702 to 724 (LVCN…QRIH), 730 to 752 (YVCD…QRIH), 758 to 780 (YVCQ…RRVH), 786 to 808 (YRCG…QRIH), 814 to 836 (YSCN…LRVH), and 842 to 864 (YQCQ…QRVH).

This sequence belongs to the krueppel C2H2-type zinc-finger protein family. Interacts with the SLBP/pre-mRNA complex but not with SLBP alone. Interacts with LSM11 in a U7 snRNP-dependent manner.

It localises to the nucleus. Involved in histone 3'-end pre-mRNA processing by associating with U7 snRNP and interacting with SLBP/pre-mRNA complex. Increases histone 3'-end pre-mRNA processing but has no effect on U7 snRNP levels, when overexpressed. Required for cell cycle progression from G1 to S phases. The chain is Zinc finger protein 473 (ZNF473) from Homo sapiens (Human).